The following is a 328-amino-acid chain: Tetraacyldisaccharide 4'-kinase (328 aa).

Residue 52-59 coordinates ATP; it reads NAGGTGKT.

Belongs to the LpxK family.

The catalysed reaction is a lipid A disaccharide + ATP = a lipid IVA + ADP + H(+). It participates in glycolipid biosynthesis; lipid IV(A) biosynthesis; lipid IV(A) from (3R)-3-hydroxytetradecanoyl-[acyl-carrier-protein] and UDP-N-acetyl-alpha-D-glucosamine: step 6/6. Its function is as follows. Transfers the gamma-phosphate of ATP to the 4'-position of a tetraacyldisaccharide 1-phosphate intermediate (termed DS-1-P) to form tetraacyldisaccharide 1,4'-bis-phosphate (lipid IVA). The protein is Tetraacyldisaccharide 4'-kinase of Jannaschia sp. (strain CCS1).